A 396-amino-acid polypeptide reads, in one-letter code: Phosphoglycerate kinase (396 aa).

Substrate-binding positions include 21-23 (DFN), Arg37, 60-63 (HLGR), Arg121, and Arg154. ATP-binding positions include Lys205, Gly296, Glu327, and 353-356 (GGDS).

Belongs to the phosphoglycerate kinase family. In terms of assembly, monomer.

It localises to the cytoplasm. The catalysed reaction is (2R)-3-phosphoglycerate + ATP = (2R)-3-phospho-glyceroyl phosphate + ADP. It participates in carbohydrate degradation; glycolysis; pyruvate from D-glyceraldehyde 3-phosphate: step 2/5. The sequence is that of Phosphoglycerate kinase from Anaeromyxobacter dehalogenans (strain 2CP-C).